The following is a 284-amino-acid chain: RCS-specific HTH-type transcriptional activator RclR (284 aa).

Cys-21 and Cys-89 are disulfide-bonded. One can recognise an HTH araC/xylS-type domain in the interval 177-278 (PRLGAVIQQM…GCTPGEYRER (102 aa)). 2 DNA-binding regions (H-T-H motif) span residues 197-218 (ESLA…RDVS) and 245-268 (VVVI…VREF).

Oxydation of Cys-21 leads to partial activation of RclR, followed by the formation of an intramolecular disulfide bond between Cys-21 and Cys-89, which stabilizes the active form of RclR. Involved in reactive chlorine species (RCS) stress resistance. Up-regulates, in response to hypochlorous acid (HOCl), the expression of three genes essential for survival of RCS stress (rclA, rclB and rclC) and its own expression. The chain is RCS-specific HTH-type transcriptional activator RclR (rclR) from Escherichia coli (strain K12).